A 261-amino-acid chain; its full sequence is Glandular kallikrein-7, submandibular/renal (261 aa).

The N-terminal stretch at 1–18 (MWFLILFLDLSLGQIDAA) is a signal peptide. Residues 19–24 (PPGQSR) constitute a propeptide, activation peptide. In terms of domain architecture, Peptidase S1 spans 25–258 (VIGGYKCEKN…FTSWIKEVMK (234 aa)). 5 cysteine pairs are disulfide-bonded: Cys-31-Cys-173, Cys-50-Cys-66, Cys-152-Cys-219, Cys-184-Cys-198, and Cys-209-Cys-234. Catalysis depends on His-65, which acts as the Charge relay system. Residue Asn-108 is glycosylated (N-linked (GlcNAc...) asparagine). Asp-120 serves as the catalytic Charge relay system. The active-site Charge relay system is the Ser-213.

Belongs to the peptidase S1 family. Kallikrein subfamily. In terms of tissue distribution, kidney and submandibular gland. Not expressed in liver, pancreas, spleen, parotid, testis, cortex, prostate, ovary and pituitary.

It carries out the reaction Preferential cleavage of Arg-|-Xaa bonds in small molecule substrates. Highly selective action to release kallidin (lysyl-bradykinin) from kininogen involves hydrolysis of Met-|-Xaa or Leu-|-Xaa.. Glandular kallikreins cleave Met-Lys and Arg-Ser bonds in kininogen to release Lys-bradykinin. Predominant kallikrein protein in the kidney. This is Glandular kallikrein-7, submandibular/renal (Klk7) from Rattus norvegicus (Rat).